The following is a 329-amino-acid chain: Beta-ketoacyl-[acyl-carrier-protein] synthase III (329 aa).

Catalysis depends on residues Cys-123 and His-256. Residues 257–261 form an ACP-binding region; that stretch reads QANIR. Residue Asn-286 is part of the active site.

This sequence belongs to the thiolase-like superfamily. FabH family. As to quaternary structure, homodimer.

Its subcellular location is the cytoplasm. It carries out the reaction malonyl-[ACP] + acetyl-CoA + H(+) = 3-oxobutanoyl-[ACP] + CO2 + CoA. The protein operates within lipid metabolism; fatty acid biosynthesis. In terms of biological role, catalyzes the condensation reaction of fatty acid synthesis by the addition to an acyl acceptor of two carbons from malonyl-ACP. Catalyzes the first condensation reaction which initiates fatty acid synthesis and may therefore play a role in governing the total rate of fatty acid production. Possesses both acetoacetyl-ACP synthase and acetyl transacylase activities. Its substrate specificity determines the biosynthesis of branched-chain and/or straight-chain of fatty acids. This chain is Beta-ketoacyl-[acyl-carrier-protein] synthase III, found in Paraburkholderia phymatum (strain DSM 17167 / CIP 108236 / LMG 21445 / STM815) (Burkholderia phymatum).